Here is a 442-residue protein sequence, read N- to C-terminus: UDP-N-acetylmuramate--L-alanine ligase (442 aa).

109 to 115 is a binding site for ATP; it reads GAHGKTS.

It belongs to the MurCDEF family.

The protein localises to the cytoplasm. It carries out the reaction UDP-N-acetyl-alpha-D-muramate + L-alanine + ATP = UDP-N-acetyl-alpha-D-muramoyl-L-alanine + ADP + phosphate + H(+). It participates in cell wall biogenesis; peptidoglycan biosynthesis. Its function is as follows. Cell wall formation. This Streptococcus pyogenes serotype M3 (strain SSI-1) protein is UDP-N-acetylmuramate--L-alanine ligase.